Here is a 384-residue protein sequence, read N- to C-terminus: Chaperone protein DnaJ (384 aa).

The region spanning 4 to 68 is the J domain; the sequence is DFYDVLGVSR…EKRQMYDQLG (65 aa). 2 disordered regions span residues 74–105 and 113–132; these read QAQKRGAGGGGGGRGQGNPFGGGGNPFGGMGG and NNLFNGGGGQRRSRPQQGRD. Residues 79–105 show a composition bias toward gly residues; the sequence is GAGGGGGGRGQGNPFGGGGNPFGGMGG. The segment at 147 to 229 adopts a CR-type zinc-finger fold; that stretch reads GVERDVTIRR…CRGSGRVRRT (83 aa). Positions 160, 163, 177, 180, 203, 206, 217, and 220 each coordinate Zn(2+). CXXCXGXG motif repeat units follow at residues 160–167, 177–184, 203–210, and 217–224; these read CPECDGEG, CSECNGSG, CRACGGEG, and CSECRGSG.

Belongs to the DnaJ family. Homodimer. Zn(2+) is required as a cofactor.

The protein resides in the cytoplasm. Functionally, participates actively in the response to hyperosmotic and heat shock by preventing the aggregation of stress-denatured proteins and by disaggregating proteins, also in an autonomous, DnaK-independent fashion. Unfolded proteins bind initially to DnaJ; upon interaction with the DnaJ-bound protein, DnaK hydrolyzes its bound ATP, resulting in the formation of a stable complex. GrpE releases ADP from DnaK; ATP binding to DnaK triggers the release of the substrate protein, thus completing the reaction cycle. Several rounds of ATP-dependent interactions between DnaJ, DnaK and GrpE are required for fully efficient folding. Also involved, together with DnaK and GrpE, in the DNA replication of plasmids through activation of initiation proteins. The polypeptide is Chaperone protein DnaJ (Haloferax mediterranei (strain ATCC 33500 / DSM 1411 / JCM 8866 / NBRC 14739 / NCIMB 2177 / R-4) (Halobacterium mediterranei)).